The sequence spans 589 residues: Putative ABC transporter ATP-binding protein MG015 (589 aa).

6 consecutive transmembrane segments (helical) span residues Leu-9–Leu-29, Leu-66–Ala-86, Leu-161–Ile-181, Ile-251–Ile-271, Ile-280–Leu-300, and Ile-303–Ser-323. Positions Leu-9–Leu-319 constitute an ABC transmembrane type-1 domain. One can recognise an ABC transporter domain in the interval Ile-352–Ser-586. Gly-385–Ser-392 lines the ATP pocket.

It belongs to the ABC transporter superfamily.

The protein localises to the cell membrane. This Mycoplasma genitalium (strain ATCC 33530 / DSM 19775 / NCTC 10195 / G37) (Mycoplasmoides genitalium) protein is Putative ABC transporter ATP-binding protein MG015.